The chain runs to 408 residues: CCA-adding enzyme (408 aa).

Positions 8 and 11 each coordinate ATP. Residues G8 and R11 each contribute to the CTP site. Mg(2+) is bound by residues E21 and D23. 3 residues coordinate ATP: R91, R137, and R140. Residues R91, R137, and R140 each coordinate CTP. Positions 226–329 (TGYYTMTTLS…MTLFHVFDCW (104 aa)) constitute an HD domain.

This sequence belongs to the tRNA nucleotidyltransferase/poly(A) polymerase family. Bacterial CCA-adding enzyme type 2 subfamily. Mg(2+) is required as a cofactor.

The catalysed reaction is a tRNA precursor + 2 CTP + ATP = a tRNA with a 3' CCA end + 3 diphosphate. It catalyses the reaction a tRNA with a 3' CCA end + 2 CTP + ATP = a tRNA with a 3' CCACCA end + 3 diphosphate. Catalyzes the addition and repair of the essential 3'-terminal CCA sequence in tRNAs without using a nucleic acid template. Adds these three nucleotides in the order of C, C, and A to the tRNA nucleotide-73, using CTP and ATP as substrates and producing inorganic pyrophosphate. tRNA 3'-terminal CCA addition is required both for tRNA processing and repair. Also involved in tRNA surveillance by mediating tandem CCA addition to generate a CCACCA at the 3' terminus of unstable tRNAs. While stable tRNAs receive only 3'-terminal CCA, unstable tRNAs are marked with CCACCA and rapidly degraded. This Blochmanniella pennsylvanica (strain BPEN) protein is CCA-adding enzyme.